We begin with the raw amino-acid sequence, 427 residues long: Interferon regulatory factor 3 (427 aa).

T3 carries the phosphothreonine modification. Residues 5 to 111 (KPRILPWLVS…DPHKIYEFVN (107 aa)) constitute a DNA-binding region (IRF tryptophan pentad repeat). S14 bears the Phosphoserine mark. T75 is subject to Phosphothreonine. The segment covering 91-107 (RLAEDRSKDPHDPHKIY) has biased composition (basic and acidic residues). The tract at residues 91–136 (RLAEDRSKDPHDPHKIYEFVNSGVGDFSQPDTSPDTNGGGSTSDTQ) is disordered. 2 positions are modified to phosphoserine: S97 and S123. The short motif at 139-149 (ILDELLGNMVL) is the Nuclear export signal element. Residues 141–427 (DELLGNMVLA…GMDFQGPGES (287 aa)) are mediates interaction with ZDHHC11. At S175 the chain carries (Microbial infection) Phosphoserine. The residue at position 180 (T180) is a Phosphothreonine. At S188 the chain carries Phosphoserine. K193 participates in a covalent cross-link: Glycyl lysine isopeptide (Lys-Gly) (interchain with G-Cter in ISG15). The tract at residues 200-360 (EEWEFEVTAF…SWPQDQPWTK (161 aa)) is interaction with HERC5. T237, T244, and T253 each carry phosphothreonine. A disulfide bridge connects residues C267 and C289. Glycyl lysine isopeptide (Lys-Gly) (interchain with G-Cter in ISG15) cross-links involve residues K360 and K366. Residue K366 is modified to N6-acetyllysine. S385 carries the post-translational modification Phosphoserine. Residue S386 is modified to Diphosphoserine. A Phosphoserine; by TBK1 modification is found at S386. S396 bears the Phosphoserine; by IKKE and TBK1 mark. A Phosphoserine modification is found at S398. The residue at position 404 (T404) is a Phosphothreonine. A Phosphoserine modification is found at S427.

This sequence belongs to the IRF family. As to quaternary structure, monomer. Homodimer; phosphorylation-induced. Interacts (when phosphorylated) with CREBBP. Interacts with MAVS (via phosphorylated pLxIS motif). Interacts with TICAM1 (via phosphorylated pLxIS motif). Interacts with STING1 (via phosphorylated pLxIS motif). Interacts with IKBKE and TBK1. Interacts with TICAM2. Interacts with RBCK1. Interacts with HERC5. Interacts with DDX3X (phosphorylated at 'Ser-102'); the interaction allows the phosphorylation and activation of IRF3 by IKBKE. Interacts with TRIM21 and ULK1, in the presence of TRIM21; this interaction leads to IRF3 degradation by autophagy. Interacts with RIOK3; RIOK3 probably mediates the interaction of TBK1 with IRF3. Interacts with ILRUN; the interaction inhibits IRF3 binding to its DNA consensus sequence. Interacts with LYAR; this interaction impairs IRF3 DNA-binding activity. Interacts with TRAF3. Interacts with ZDHHC11; ZDHHC11 recruits IRF3 to STING1 upon DNA virus infection and thereby promotes IRF3 activation. Interacts with HSP90AA1; the interaction mediates IRF3 association with TOMM70. Interacts with BCL2; the interaction decreases upon Sendai virus infection. Interacts with BAX; the interaction is direct, increases upon Sendai virus infection and mediates the formation of the apoptosis complex TOMM70:HSP90AA1:IRF3:BAX. Interacts with DDX56. Interacts with NBR1. In terms of assembly, (Microbial infection) Interacts with rotavirus A NSP1 (via pLxIS motif); this interaction leads to the proteasome-dependent degradation of IRF3. (Microbial infection) Interacts with herpes virus 8/HHV-8 protein VIRF1. As to quaternary structure, (Microbial infection) Interacts with Seneca Valley virus protease 3C; this interaction is involved in the suppression of IRF3 expression and phosphorylation by the virus. In terms of assembly, (Microbial infection) Interacts with herpes virus 2/HHV-2 protein ICP27; this interaction inhibits IRF3 phosphorylation and nuclear translocation. (Microbial infection) Interacts with human cytomegalovirus protein UL44; this interaction prevents IRF3 binding to its promoters. As to quaternary structure, (Microbial infection) Interacts with the two fragments of MERS-COV protein N produced by CASP6 through proteolytic cleavage; both interactions inhibit IRF3 nuclear translocation after activation and IFN signaling. Post-translationally, constitutively phosphorylated on many Ser/Thr residues. Activated following phosphorylation by TBK1 and IKBKE. Innate adapter proteins, such as MAVS, STING1 or TICAM1, are first activated by viral RNA, cytosolic DNA, and bacterial lipopolysaccharide (LPS), respectively, leading to activation of the kinases TBK1 and IKBKE. These kinases then phosphorylate the adapter proteins on the pLxIS motif, leading to recruitment of IRF3, thereby licensing IRF3 for phosphorylation by TBK1. Phosphorylation at Ser-386 is followed by pyrophosphorylation at the same residue, promoting phosphorylation at Ser-396. Phosphorylated IRF3 dissociates from the adapter proteins, dimerizes, and then enters the nucleus to induce IFNs. In terms of processing, pyrophosphorylated by UAP1 following phosphorylation at Ser-386 by TBK1. Pyrophosphorylation promotes subsequent phosphorylation at Ser-396, leading to homodimerization of IRF3. Acetylation at Lys-366 by KAT8 inhibits recruimtent to promoters and transcription factor activity. Acetylation by KAT8 is promoted by phosphorylation at Ser-396. Post-translationally, ubiquitinated; ubiquitination involves RBCK1 leading to proteasomal degradation. Polyubiquitinated; ubiquitination involves TRIM21 leading to proteasomal degradation. Ubiquitinated by UBE3C, leading to its degradation. Deubiquitinated by USP5 on both 'Lys-48'-linked unanchored and 'Lys-63'-linked anchored polyubiquitin, leading to inhibition of anti-RNA viral innate immunity. In terms of processing, ISGylated by HERC5 resulting in sustained IRF3 activation and in the inhibition of IRF3 ubiquitination by disrupting PIN1 binding. The phosphorylation state of IRF3 does not alter ISGylation. Proteolytically cleaved by apoptotic caspases during apoptosis, leading to its inactivation. Cleavage by CASP3 during virus-induced apoptosis inactivates it, preventing cytokine overproduction. Post-translationally, (Microbial infection) ISGylated. ISGylation is cleaved and removed by SARS-COV-2 nsp3 which attenuates type I interferon responses. In terms of processing, (Microbial infection) Phosphorylation and subsequent activation of IRF3 is inhibited by vaccinia virus protein E3. (Microbial infection) Phosphorylated by herpes simplex virus 1/HHV-1 US3 at Ser-175 to prevent IRF3 activation. As to expression, expressed constitutively in a variety of tissues.

It is found in the cytoplasm. The protein resides in the nucleus. It localises to the mitochondrion. In the absence of viral infection, maintained as a monomer in an autoinhibited state. Phosphorylation by TBK1 and IKBKE disrupts this autoinhibition leading to the liberation of the DNA-binding and dimerization activities and its nuclear localization where it can activate type I IFN and ISG genes. Phosphorylation and activation follow the following steps: innate adapter proteins, such as MAVS, STING1 or TICAM1, are first activated by viral RNA, cytosolic DNA and bacterial lipopolysaccharide (LPS), respectively, leading to activation of the kinases TBK1 and IKBKE. These kinases then phosphorylate the adapter proteins on their pLxIS motif, leading to recruitment of IRF3, thereby licensing IRF3 for phosphorylation by TBK1. Phosphorylated IRF3 dissociates from the adapter proteins, dimerizes, and then enters the nucleus to induce IFNs. With respect to regulation, (Microbial infection) Activated upon coronavirus SARS-CoV-2 infection. Key transcriptional regulator of type I interferon (IFN)-dependent immune responses which plays a critical role in the innate immune response against DNA and RNA viruses. Regulates the transcription of type I IFN genes (IFN-alpha and IFN-beta) and IFN-stimulated genes (ISG) by binding to an interferon-stimulated response element (ISRE) in their promoters. Acts as a more potent activator of the IFN-beta (IFNB) gene than the IFN-alpha (IFNA) gene and plays a critical role in both the early and late phases of the IFNA/B gene induction. Found in an inactive form in the cytoplasm of uninfected cells and following viral infection, double-stranded RNA (dsRNA), or toll-like receptor (TLR) signaling, is phosphorylated by IKBKE and TBK1 kinases. This induces a conformational change, leading to its dimerization and nuclear localization and association with CREB binding protein (CREBBP) to form dsRNA-activated factor 1 (DRAF1), a complex which activates the transcription of the type I IFN and ISG genes. Can activate distinct gene expression programs in macrophages and can induce significant apoptosis in primary macrophages. In response to Sendai virus infection, is recruited by TOMM70:HSP90AA1 to mitochondrion and forms an apoptosis complex TOMM70:HSP90AA1:IRF3:BAX inducing apoptosis. Key transcription factor regulating the IFN response during SARS-CoV-2 infection. This chain is Interferon regulatory factor 3, found in Homo sapiens (Human).